A 371-amino-acid chain; its full sequence is Dual-specificity RNA methyltransferase RlmN (371 aa).

Glutamate 97 (proton acceptor) is an active-site residue. The region spanning 103-341 is the Radical SAM core domain; that stretch reads DGDRATLCVS…VTVRTTRGDD (239 aa). Residues cysteine 110 and cysteine 346 are joined by a disulfide bond. Cysteine 117, cysteine 121, and cysteine 124 together coordinate [4Fe-4S] cluster. Residues 171–172, serine 203, 225–227, and asparagine 303 each bind S-adenosyl-L-methionine; these read GE and SLH. Residue cysteine 346 is the S-methylcysteine intermediate of the active site.

It belongs to the radical SAM superfamily. RlmN family. [4Fe-4S] cluster serves as cofactor.

The protein resides in the cytoplasm. It catalyses the reaction adenosine(2503) in 23S rRNA + 2 reduced [2Fe-2S]-[ferredoxin] + 2 S-adenosyl-L-methionine = 2-methyladenosine(2503) in 23S rRNA + 5'-deoxyadenosine + L-methionine + 2 oxidized [2Fe-2S]-[ferredoxin] + S-adenosyl-L-homocysteine. The enzyme catalyses adenosine(37) in tRNA + 2 reduced [2Fe-2S]-[ferredoxin] + 2 S-adenosyl-L-methionine = 2-methyladenosine(37) in tRNA + 5'-deoxyadenosine + L-methionine + 2 oxidized [2Fe-2S]-[ferredoxin] + S-adenosyl-L-homocysteine. In terms of biological role, specifically methylates position 2 of adenine 2503 in 23S rRNA and position 2 of adenine 37 in tRNAs. m2A2503 modification seems to play a crucial role in the proofreading step occurring at the peptidyl transferase center and thus would serve to optimize ribosomal fidelity. The chain is Dual-specificity RNA methyltransferase RlmN from Marinomonas sp. (strain MWYL1).